The sequence spans 245 residues: UDP-2,3-diacylglucosamine hydrolase (245 aa).

Residues aspartate 8, histidine 10, aspartate 41, asparagine 79, and histidine 114 each contribute to the Mn(2+) site. Residue asparagine 79–arginine 80 participates in substrate binding. Substrate-binding residues include aspartate 122, serine 160, lysine 164, lysine 167, and histidine 195. Residues histidine 195 and histidine 197 each contribute to the Mn(2+) site.

It belongs to the LpxH family. The cofactor is Mn(2+).

It localises to the cell inner membrane. It carries out the reaction UDP-2-N,3-O-bis[(3R)-3-hydroxytetradecanoyl]-alpha-D-glucosamine + H2O = 2-N,3-O-bis[(3R)-3-hydroxytetradecanoyl]-alpha-D-glucosaminyl 1-phosphate + UMP + 2 H(+). The protein operates within glycolipid biosynthesis; lipid IV(A) biosynthesis; lipid IV(A) from (3R)-3-hydroxytetradecanoyl-[acyl-carrier-protein] and UDP-N-acetyl-alpha-D-glucosamine: step 4/6. Functionally, hydrolyzes the pyrophosphate bond of UDP-2,3-diacylglucosamine to yield 2,3-diacylglucosamine 1-phosphate (lipid X) and UMP by catalyzing the attack of water at the alpha-P atom. Involved in the biosynthesis of lipid A, a phosphorylated glycolipid that anchors the lipopolysaccharide to the outer membrane of the cell. This is UDP-2,3-diacylglucosamine hydrolase from Aromatoleum aromaticum (strain DSM 19018 / LMG 30748 / EbN1) (Azoarcus sp. (strain EbN1)).